We begin with the raw amino-acid sequence, 343 residues long: UDP-3-O-acylglucosamine N-acyltransferase 2 (343 aa).

The active-site Proton acceptor is the His251.

Belongs to the transferase hexapeptide repeat family. LpxD subfamily. In terms of assembly, homotrimer.

It carries out the reaction a UDP-3-O-[(3R)-3-hydroxyacyl]-alpha-D-glucosamine + a (3R)-hydroxyacyl-[ACP] = a UDP-2-N,3-O-bis[(3R)-3-hydroxyacyl]-alpha-D-glucosamine + holo-[ACP] + H(+). It participates in bacterial outer membrane biogenesis; LPS lipid A biosynthesis. Catalyzes the N-acylation of UDP-3-O-acylglucosamine using 3-hydroxyacyl-ACP as the acyl donor. Is involved in the biosynthesis of lipid A, a phosphorylated glycolipid that anchors the lipopolysaccharide to the outer membrane of the cell. In Legionella pneumophila (strain Paris), this protein is UDP-3-O-acylglucosamine N-acyltransferase 2.